Here is a 213-residue protein sequence, read N- to C-terminus: Uridine kinase (213 aa).

15 to 22 provides a ligand contact to ATP; the sequence is GASASGKS.

This sequence belongs to the uridine kinase family.

The protein resides in the cytoplasm. The enzyme catalyses uridine + ATP = UMP + ADP + H(+). It carries out the reaction cytidine + ATP = CMP + ADP + H(+). The protein operates within pyrimidine metabolism; CTP biosynthesis via salvage pathway; CTP from cytidine: step 1/3. It functions in the pathway pyrimidine metabolism; UMP biosynthesis via salvage pathway; UMP from uridine: step 1/1. The polypeptide is Uridine kinase (Cronobacter sakazakii (strain ATCC BAA-894) (Enterobacter sakazakii)).